The sequence spans 129 residues: Small ribosomal subunit protein uS8 (129 aa).

Belongs to the universal ribosomal protein uS8 family. Part of the 30S ribosomal subunit. Contacts proteins S5 and S12.

Functionally, one of the primary rRNA binding proteins, it binds directly to 16S rRNA central domain where it helps coordinate assembly of the platform of the 30S subunit. In Mesoplasma florum (strain ATCC 33453 / NBRC 100688 / NCTC 11704 / L1) (Acholeplasma florum), this protein is Small ribosomal subunit protein uS8.